We begin with the raw amino-acid sequence, 305 residues long: Dermonecrotic toxin LiSicTox-alphaII1 (305 aa).

Residues 1 to 18 (MLLHIALILGCWSVFSEG) form the signal peptide. A propeptide spanning residues 19–26 (AETDVAER) is cleaved from the precursor. Residue His38 is part of the active site. Glu58 and Asp60 together coordinate Mg(2+). His74 functions as the Nucleophile in the catalytic mechanism. 2 cysteine pairs are disulfide-bonded: Cys78/Cys84 and Cys80/Cys223. Position 118 (Asp118) interacts with Mg(2+).

The protein belongs to the arthropod phospholipase D family. Class II subfamily. Class IIa sub-subfamily. Requires Mg(2+) as cofactor. As to expression, expressed by the venom gland.

It localises to the secreted. The catalysed reaction is an N-(acyl)-sphingosylphosphocholine = an N-(acyl)-sphingosyl-1,3-cyclic phosphate + choline. It carries out the reaction an N-(acyl)-sphingosylphosphoethanolamine = an N-(acyl)-sphingosyl-1,3-cyclic phosphate + ethanolamine. It catalyses the reaction a 1-acyl-sn-glycero-3-phosphocholine = a 1-acyl-sn-glycero-2,3-cyclic phosphate + choline. The enzyme catalyses a 1-acyl-sn-glycero-3-phosphoethanolamine = a 1-acyl-sn-glycero-2,3-cyclic phosphate + ethanolamine. Its function is as follows. Dermonecrotic toxins cleave the phosphodiester linkage between the phosphate and headgroup of certain phospholipids (sphingolipid and lysolipid substrates), forming an alcohol (often choline) and a cyclic phosphate. This toxin acts on sphingomyelin (SM) wih high activity. It may also act on ceramide phosphoethanolamine (CPE), lysophosphatidylcholine (LPC) and lysophosphatidylethanolamine (LPE), but not on lysophosphatidylserine (LPS), and lysophosphatidylglycerol (LPG). It acts by transphosphatidylation, releasing exclusively cyclic phosphate products as second products. Shows high hemolytic activity. Causes dermonecrosis, induces inflammatory response, platelet aggregation and increases vessel permeability. Shows no lethality when injected at higher dose into mice. May cause complement-dependent hemolysis as well as in a complement-independent manner. The hemolysis provoked in a complement-independent manner may be composed of several steps. The toxin may bind to erythrocyte membranes, may hydrolyze membrane phospholipids (SM and LPC) thus generating metabolism products that may cause hemolysis, probably by provoking an increase of calcium inside cells. The calcium influx may be due to the opening of L-type calcium channels, since L-type calcium channel blockers inhibit calcium influx. This Loxosceles intermedia (Brown spider) protein is Dermonecrotic toxin LiSicTox-alphaII1.